We begin with the raw amino-acid sequence, 265 residues long: MLLTIDVGNTHTVLGLFDGEDIVEHWRISTDSRRTADELAVLLQGLMGMHPLLGDELGDGIDGIAICATVPSVLHELREVTRRYYGDVPAVLVEPGVKTGVPILTDHPKEVGADRIINAVAAVELYGGPAIVVDFGTATTFDAVSARGEYIGGVIAPGIEISVEALGVKGAQLRKIEVARPRSVIGKNTVEAMQSGIVYGFAGQVDGVVNRMARELADDPDDVTVIATGGLAPMVLGESSVIDEHEPWLTLMGLRLVYERNVSRM.

Residue D6–V13 coordinates ATP. G112–R115 is a binding site for substrate. D114 serves as the catalytic Proton acceptor. D134 contacts K(+). T137 serves as a coordination point for ATP. T189 contributes to the substrate binding site.

This sequence belongs to the type III pantothenate kinase family. Homodimer. NH4(+) is required as a cofactor. It depends on K(+) as a cofactor.

It is found in the cytoplasm. The catalysed reaction is (R)-pantothenate + ATP = (R)-4'-phosphopantothenate + ADP + H(+). It participates in cofactor biosynthesis; coenzyme A biosynthesis; CoA from (R)-pantothenate: step 1/5. Its function is as follows. Catalyzes the phosphorylation of pantothenate (Pan), the first step in CoA biosynthesis. This is Type III pantothenate kinase from Streptomyces coelicolor (strain ATCC BAA-471 / A3(2) / M145).